A 41-amino-acid polypeptide reads, in one-letter code: MMNLSYNSKSKATVIFVSNSTRNSSSSSRSSYSSRTTVFSL.

A disordered region spans residues Asn-19–Leu-41.

This is an uncharacterized protein from Dictyostelium discoideum (Social amoeba).